Reading from the N-terminus, the 275-residue chain is Lectin DB58 (275 aa).

A signal peptide spans 1 to 22 (MASSTVSVVLSLFLLLLTQAYS). N-linked (GlcNAc...) asparagine glycosylation is found at Asn-34 and Asn-101.

This sequence belongs to the leguminous lectin family. As to quaternary structure, heterodimer, composed of an alpha and a beta subunit derived from a single precursor. Post-translationally, leu-264 is missing in a major portion of the beta subunit, suggesting an origin by sequential removal of amino acids rather than a processing by endoproteolytic cleavage.

Its function is as follows. Metalloglycoprotein, containing Ca, Mg, Mn, and Zn and the carbohydrates galactose, glucosamine, mannose, and fucose. It agglutinates erythrocytes of blood group A1. In Vigna unguiculata subsp. cylindrica (Horse gram), this protein is Lectin DB58.